The sequence spans 521 residues: Protein TESPA1 (521 aa).

Serine 311 carries the post-translational modification Phosphoserine. A compositionally biased stretch (polar residues) spans 331–341 (QQDSDLGQFSQ). Disordered stretches follow at residues 331 to 351 (QQDS…AEGK) and 461 to 521 (QQKW…GKDS). Basic and acidic residues predominate over residues 466–475 (QSVDRPELRR). Residues 485-498 (FDLEEVQSNSEEEQ) are compositionally biased toward acidic residues. A compositionally biased stretch (basic residues) spans 505–514 (SRPRHPHHHQ).

Interacts with PLCG1 and GRB2; the association is increased with prolonged stimulation of the TCR and may facilitate the assembly of the LAT signalosome. Interacts with ITPR1. Also interacts with ITPR3. Interacts with HSPA9. Post-translationally, may be phosphorylated in response to store-operated Ca(+2) entry.

The protein resides in the cytoplasm. The protein localises to the endoplasmic reticulum membrane. Functionally, required for the development and maturation of T-cells, its function being essential for the late stages of thymocyte development. Plays a role in T-cell antigen receptor (TCR)-mediated activation of the ERK and NFAT signaling pathways, possibly by serving as a scaffolding protein that promotes the assembly of the LAT signalosome in thymocytes. May play a role in the regulation of inositol 1,4,5-trisphosphate receptor-mediated Ca(2+) release and mitochondrial Ca(2+) uptake via the mitochondria-associated endoplasmic reticulum membrane (MAM) compartment. This chain is Protein TESPA1 (TESPA1), found in Homo sapiens (Human).